The sequence spans 795 residues: Phospholipase A-2-activating protein (795 aa).

WD repeat units follow at residues 17–56, 63–107, 110–148, 149–188, 190–227, 229–268, and 270–307; these read HELD…RGFT, GHSN…PLYI, GHKD…MTLQ, GHTA…RTFS, HEDC…LGVY, GHTN…QTIR, and PAQS…TASA. At Ser-50 the chain carries Phosphoserine. Residues 366–465 form the PFU domain; sequence QWSVSDGRWI…KGQTLGLGNT (100 aa). An N6-acetyllysine modification is found at Lys-529. The PUL domain maps to 533–794; sequence IYFPKKEALT…SECCRLILNL (262 aa). ARM repeat units lie at residues 546–588, 589–620, 621–669, 670–715, 716–755, and 756–795; these read ANPT…GNAS, EKPT…LRLS, IKHP…CFVS, QAGQ…CFHK, DHNI…LISD, and DSNA…LNLL.

This sequence belongs to the WD repeat PLAP family. As to quaternary structure, interacts with ubiquitin. Interacts with UBXN6, VCP and YOD1; may form a complex involved in macroautophagy.

It is found in the nucleus. The protein resides in the cytoplasm. It localises to the synapse. Its function is as follows. Plays a role in protein ubiquitination, sorting and degradation through its association with VCP. Involved in ubiquitin-mediated membrane proteins trafficking to late endosomes in an ESCRT-dependent manner, and hence plays a role in synaptic vesicle recycling. May play a role in macroautophagy, regulating for instance the clearance of damaged lysosomes. Plays a role in cerebellar Purkinje cell development. Positively regulates cytosolic and calcium-independent phospholipase A2 activities in a tumor necrosis factor alpha (TNF-alpha)- or lipopolysaccharide (LPS)-dependent manner, and hence prostaglandin E2 biosynthesis. This chain is Phospholipase A-2-activating protein (Plaa), found in Rattus norvegicus (Rat).